Consider the following 252-residue polypeptide: MTTGNGDAPVIKNAHSDIDSTNKTLLKSDALYKYVLDTTVLPREPECMRDLRLITDKHQWGFMQSSADEAQLLGMLLKMAGAKRTIEVGVFTGYSLLATALALPEDGKVVAIDPDRESYEIGRPFLEKAGVAHKVDFREGKGLEKLDELLAEEAAAGREAAFDFAFVDADKPNYVKYHEQLLQLVRVGGHIVYDNTLWAGTVALPPDTPLSDLDRRFSVAIRDLNSRLAADPRIDVCQLAIADGITICRRLV.

Residues S65, E87, 89-90, S95, and D113 contribute to the S-adenosyl-L-methionine site; that span reads GV. D168 provides a ligand contact to a divalent metal cation. An S-adenosyl-L-methionine-binding site is contributed by D170. 2 residues coordinate a divalent metal cation: D194 and N195.

Belongs to the class I-like SAM-binding methyltransferase superfamily. Cation-dependent O-methyltransferase family. CCoAMT subfamily. Mg(2+) serves as cofactor. The cofactor is Mn(2+). Requires Co(2+) as cofactor. As to expression, ubiquitous. Highest expression in stems and roots.

The protein localises to the nucleus. The enzyme catalyses tricetin + 2 S-adenosyl-L-methionine = 3',5'-di-O-methyltricetin + 2 S-adenosyl-L-homocysteine + 2 H(+). Functionally, catalyzes the stepwise methylation of tricetin to its 3'-mono- and 3',5'-dimethyl ethers. No 3',4',5'-trimethylated ester derivatives are produced. Can use caffeoyl-CoA, 5-hydroxyferulic acid, luteolin, tricetin, quercetin, myrcetin and 7,8-dihydroxyflavone as substrates, but not naringenin, apigenin or kaempferol. The 2,3-double bond and the O-dihydroxyl group of the substrate are both required for catalytic activity of the enzyme. The polypeptide is Tricin synthase 1 (ROMT-15) (Oryza sativa subsp. japonica (Rice)).